The chain runs to 71 residues: Exodeoxyribonuclease 7 small subunit (71 aa).

This sequence belongs to the XseB family. As to quaternary structure, heterooligomer composed of large and small subunits.

It is found in the cytoplasm. The catalysed reaction is Exonucleolytic cleavage in either 5'- to 3'- or 3'- to 5'-direction to yield nucleoside 5'-phosphates.. In terms of biological role, bidirectionally degrades single-stranded DNA into large acid-insoluble oligonucleotides, which are then degraded further into small acid-soluble oligonucleotides. This chain is Exodeoxyribonuclease 7 small subunit, found in Streptococcus thermophilus (strain ATCC BAA-250 / LMG 18311).